Here is a 249-residue protein sequence, read N- to C-terminus: Adapter protein MecA (249 aa).

Belongs to the MecA family. As to quaternary structure, homodimer.

Enables the recognition and targeting of unfolded and aggregated proteins to the ClpC protease or to other proteins involved in proteolysis. This chain is Adapter protein MecA, found in Streptococcus thermophilus (strain ATCC BAA-250 / LMG 18311).